A 358-amino-acid chain; its full sequence is Ribosomal RNA large subunit methyltransferase M (358 aa).

Residues Ser-187, 220 to 223 (CPGG), Asp-239, Asp-259, and Asp-276 contribute to the S-adenosyl-L-methionine site. Lys-305 acts as the Proton acceptor in catalysis.

It belongs to the class I-like SAM-binding methyltransferase superfamily. RNA methyltransferase RlmE family. RlmM subfamily. Monomer.

The protein localises to the cytoplasm. The enzyme catalyses cytidine(2498) in 23S rRNA + S-adenosyl-L-methionine = 2'-O-methylcytidine(2498) in 23S rRNA + S-adenosyl-L-homocysteine + H(+). In terms of biological role, catalyzes the 2'-O-methylation at nucleotide C2498 in 23S rRNA. This Shewanella woodyi (strain ATCC 51908 / MS32) protein is Ribosomal RNA large subunit methyltransferase M.